The following is a 95-amino-acid chain: Co-chaperonin GroES (95 aa).

This sequence belongs to the GroES chaperonin family. In terms of assembly, heptamer of 7 subunits arranged in a ring. Interacts with the chaperonin GroEL.

It localises to the cytoplasm. Functionally, together with the chaperonin GroEL, plays an essential role in assisting protein folding. The GroEL-GroES system forms a nano-cage that allows encapsulation of the non-native substrate proteins and provides a physical environment optimized to promote and accelerate protein folding. GroES binds to the apical surface of the GroEL ring, thereby capping the opening of the GroEL channel. The sequence is that of Co-chaperonin GroES from Bordetella petrii (strain ATCC BAA-461 / DSM 12804 / CCUG 43448).